The primary structure comprises 495 residues: Cytochrome P450 94C1 (495 aa).

The chain crosses the membrane as a helical span at residues 2 to 22 (LLIISFTIVSFFFIIIFSLFH). Cys-439 contacts heme.

It belongs to the cytochrome P450 family. Heme is required as a cofactor.

The protein resides in the membrane. The protein localises to the endoplasmic reticulum membrane. It carries out the reaction a 12-hydroxyjasmonyl-L-alpha-amino acid + 2 reduced [NADPH--hemoprotein reductase] + 2 O2 = a 12-hydroxy-12-oxojasmonyl-L-alpha-amino acid + 2 oxidized [NADPH--hemoprotein reductase] + 3 H2O + 3 H(+). Functionally, involved in the oxidation of the plant hormone jasmonoyl-L-isoleucine (JA-Ile), a bioactive phytohormone of the jasmonate-mediated signaling pathway. Converts 12-hydroxy-JA-Ile (12OH-JA-Ile) to the carboxy-derivative 12COOH-JA-Ile. Exerts negative feedback control on JA-Ile levels and plays a role in attenuation of jasmonate responses. Also functions as in-chain fatty acids hydroxylase in vitro. Catalyzes the hydroxylation of 12-hydroxy-jasmonoyl-L-phenylalanine (12OH-JA-Phe) in vitro. Converts 12OH-JA-Phe to the carboxy-derivative 12COOH-JA-Phe. The sequence is that of Cytochrome P450 94C1 from Arabidopsis thaliana (Mouse-ear cress).